Reading from the N-terminus, the 112-residue chain is Tyrosine-protein phosphatase 8 (112 aa).

Positions 1 to 112 constitute a Tyrosine-protein phosphatase domain; sequence ENSTAIVMIT…ANSEYGPVVV (112 aa).

It belongs to the protein-tyrosine phosphatase family.

It catalyses the reaction O-phospho-L-tyrosyl-[protein] + H2O = L-tyrosyl-[protein] + phosphate. This Styela plicata (Wrinkled sea squirt) protein is Tyrosine-protein phosphatase 8 (STY-8).